The following is a 569-amino-acid chain: Urease subunit alpha (569 aa).

The region spanning 131–569 (GGIDAHIHFI…VPMAQRYFLF (439 aa)) is the Urease domain. Ni(2+)-binding residues include H136, H138, and K219. Position 219 is an N6-carboxylysine (K219). Substrate is bound at residue H221. The Ni(2+) site is built by H248 and H274. H322 acts as the Proton donor in catalysis. Residue D362 coordinates Ni(2+).

The protein belongs to the metallo-dependent hydrolases superfamily. Urease alpha subunit family. Heterotrimer of UreA (gamma), UreB (beta) and UreC (alpha) subunits. Three heterotrimers associate to form the active enzyme. It depends on Ni cation as a cofactor. Post-translationally, carboxylation allows a single lysine to coordinate two nickel ions.

The protein localises to the cytoplasm. The enzyme catalyses urea + 2 H2O + H(+) = hydrogencarbonate + 2 NH4(+). The protein operates within nitrogen metabolism; urea degradation; CO(2) and NH(3) from urea (urease route): step 1/1. The sequence is that of Urease subunit alpha from Bacillus sp. (strain TB-90).